A 544-amino-acid chain; its full sequence is Chaperonin GroEL 3 (544 aa).

Residues 30-33, Lys51, 87-91, Gly415, and Asp496 each bind ATP; these read TLGP and DGTTT.

It belongs to the chaperonin (HSP60) family. Forms a cylinder of 14 subunits composed of two heptameric rings stacked back-to-back. Interacts with the co-chaperonin GroES.

Its subcellular location is the cytoplasm. It carries out the reaction ATP + H2O + a folded polypeptide = ADP + phosphate + an unfolded polypeptide.. Functionally, together with its co-chaperonin GroES, plays an essential role in assisting protein folding. The GroEL-GroES system forms a nano-cage that allows encapsulation of the non-native substrate proteins and provides a physical environment optimized to promote and accelerate protein folding. The sequence is that of Chaperonin GroEL 3 from Rhizobium meliloti (strain 1021) (Ensifer meliloti).